Reading from the N-terminus, the 1827-residue chain is Laminin subunit beta-4 (1827 aa).

The first 21 residues, 1 to 21 (MLLRLELSALLLLLIAAPVRL), serve as a signal peptide directing secretion. The region spanning 26–266 (VGNSCYPNLG…ALYEMVVRGS (241 aa)) is the Laminin N-terminal domain. The N-linked (GlcNAc...) asparagine glycan is linked to asparagine 231. Intrachain disulfides connect cysteine 267–cysteine 276, cysteine 269–cysteine 297, cysteine 299–cysteine 308, cysteine 311–cysteine 331, cysteine 334–cysteine 343, cysteine 336–cysteine 361, cysteine 364–cysteine 373, cysteine 376–cysteine 394, cysteine 397–cysteine 410, cysteine 399–cysteine 417, cysteine 419–cysteine 428, cysteine 431–cysteine 446, cysteine 449–cysteine 463, cysteine 451–cysteine 470, cysteine 472–cysteine 481, cysteine 484–cysteine 498, cysteine 501–cysteine 513, cysteine 503–cysteine 520, and cysteine 522–cysteine 531. 4 consecutive Laminin EGF-like domains span residues 267–333 (CFCN…VCKR), 334–396 (CNCH…ACIP), 397–448 (CDCD…GCQL), and 449–500 (CRCN…GCIP). In terms of domain architecture, Laminin EGF-like 5; truncated spans 501–544 (CDCDIGGALKTECSSVDGQCKCRPNMVGQKCNDPAPGYFLAPLD). The Laminin IV type B domain occupies 540-847 (LAPLDFYIYE…LIGSMSAFIH (308 aa)). 32 cysteine pairs are disulfide-bonded: cysteine 853–cysteine 865, cysteine 855–cysteine 872, cysteine 874–cysteine 883, cysteine 886–cysteine 898, cysteine 901–cysteine 913, cysteine 903–cysteine 920, cysteine 922–cysteine 931, cysteine 934–cysteine 944, cysteine 947–cysteine 956, cysteine 949–cysteine 963, cysteine 966–cysteine 975, cysteine 978–cysteine 992, cysteine 995–cysteine 1011, cysteine 997–cysteine 1022, cysteine 1024–cysteine 1033, cysteine 1036–cysteine 1051, cysteine 1054–cysteine 1068, cysteine 1056–cysteine 1075, cysteine 1078–cysteine 1087, cysteine 1090–cysteine 1103, cysteine 1106–cysteine 1126, cysteine 1108–cysteine 1133, cysteine 1135–cysteine 1144, cysteine 1147–cysteine 1160, cysteine 1163–cysteine 1175, cysteine 1165–cysteine 1182, cysteine 1184–cysteine 1193, cysteine 1196–cysteine 1208, cysteine 1211–cysteine 1223, cysteine 1213–cysteine 1230, cysteine 1232–cysteine 1241, and cysteine 1244–cysteine 1255. Laminin EGF-like domains follow at residues 853-900 (CNCH…GCSP), 901-946 (CDCD…LCRR), 947-994 (CQCN…PCEP), 995-1053 (CLCP…RCKE), 1054-1105 (CCCN…DCKE), 1106-1162 (CSCD…GCQP), 1163-1210 (CNCN…QCMF), and 1211-1257 (CDCN…ACEP). N-linked (GlcNAc...) asparagine glycosylation occurs at asparagine 1001. The interval 1258–1449 (CHACNHLWEK…LSAANINEEV (192 aa)) is domain II. 2 coiled-coil regions span residues 1294 to 1335 (ELQH…EIID) and 1385 to 1449 (NKIK…NEEV). Asparagine 1329 is a glycosylation site (N-linked (GlcNAc...) asparagine). The tract at residues 1450 to 1476 (CGAPGDAECEKAKCGGALCGKCGGPDC) is domain alpha. The interval 1477–1827 (TGSLPISLNA…KVQRYNLCSP (351 aa)) is domain I. N-linked (GlcNAc...) asparagine glycans are attached at residues asparagine 1485, asparagine 1496, asparagine 1513, asparagine 1533, asparagine 1599, asparagine 1629, asparagine 1644, asparagine 1672, asparagine 1686, asparagine 1702, asparagine 1726, asparagine 1745, asparagine 1750, and asparagine 1761. Coiled-coil stretches lie at residues 1485-1554 (NASK…EKVK) and 1584-1820 (DEIK…DKVQ).

As to quaternary structure, laminin is a complex glycoprotein, consisting of three different polypeptide chains (alpha, beta, gamma), which are bound to each other by disulfide bonds into a cross-shaped molecule comprising one long and three short arms with globules at each end.

It localises to the secreted. The protein resides in the extracellular space. Its subcellular location is the extracellular matrix. The protein localises to the basement membrane. Binding to cells via a high affinity receptor, laminin is thought to mediate the attachment, migration and organization of cells into tissues during embryonic development by interacting with other extracellular matrix components. Positively regulates apical-basal distribution of Muller glia cells in the retina. This is Laminin subunit beta-4 (lamb4) from Danio rerio (Zebrafish).